We begin with the raw amino-acid sequence, 239 residues long: Probable fimbrial chaperone YehC (239 aa).

A signal peptide spans 1–31; the sequence is MAAIPWRPFNLRGIKMKGLLSLLIFSMVLPA.

It belongs to the periplasmic pilus chaperone family.

It is found in the periplasm. Its function is as follows. Part of the yehABCD fimbrial operon. Could contribute to adhesion to various surfaces in specific environmental niches. This chain is Probable fimbrial chaperone YehC (yehC), found in Escherichia coli (strain K12).